The following is a 158-amino-acid chain: Transcription elongation factor GreB (158 aa).

The stretch at 53-75 (KRRLREIDRRVRFLTKRLEVLQI) forms a coiled coil.

The protein belongs to the GreA/GreB family. GreB subfamily.

Necessary for efficient RNA polymerase transcription elongation past template-encoded arresting sites. The arresting sites in DNA have the property of trapping a certain fraction of elongating RNA polymerases that pass through, resulting in locked ternary complexes. Cleavage of the nascent transcript by cleavage factors such as GreA or GreB allows the resumption of elongation from the new 3'terminus. GreB releases sequences of up to 9 nucleotides in length. The sequence is that of Transcription elongation factor GreB from Haemophilus influenzae (strain ATCC 51907 / DSM 11121 / KW20 / Rd).